The sequence spans 398 residues: Acetate kinase (398 aa).

N7 is a Mg(2+) binding site. K14 contacts ATP. R90 lines the substrate pocket. D147 acts as the Proton donor/acceptor in catalysis. ATP is bound by residues 207 to 211 (HLGNG), 282 to 284 (DMR), and 330 to 334 (GIGEN). E383 is a binding site for Mg(2+).

The protein belongs to the acetokinase family. Homodimer. Mg(2+) serves as cofactor. Mn(2+) is required as a cofactor.

The protein localises to the cytoplasm. It catalyses the reaction acetate + ATP = acetyl phosphate + ADP. It functions in the pathway metabolic intermediate biosynthesis; acetyl-CoA biosynthesis; acetyl-CoA from acetate: step 1/2. Its function is as follows. Catalyzes the formation of acetyl phosphate from acetate and ATP. Can also catalyze the reverse reaction. The protein is Acetate kinase of Symbiobacterium thermophilum (strain DSM 24528 / JCM 14929 / IAM 14863 / T).